We begin with the raw amino-acid sequence, 211 residues long: Claudin-1 (211 aa).

Residues 1–7 lie on the Cytoplasmic side of the membrane; that stretch reads MANAGLQ. The helical transmembrane segment at 8–28 threads the bilayer; sequence LLGFILASLGWIGSIVSTALP. Residues 29-81 lie on the Extracellular side of the membrane; sequence QWKIYSYAGDNIVTAQAIYEGLWMSCVSQSTGQIQCKVFDSLLNLNSTLQATR. A disulfide bond links Cys54 and Cys64. A helical membrane pass occupies residues 82–102; it reads ALMVIGILLGLIAIFVSTIGM. Residues 103-115 lie on the Cytoplasmic side of the membrane; that stretch reads KCMRCLEDDEVQK. Residues 116–136 form a helical membrane-spanning segment; sequence MWMAVIGGIIFLISGLATLVA. The Extracellular segment spans residues 137-163; that stretch reads TAWYGNRIVQEFYDPLTPINARYEFGQ. The chain crosses the membrane as a helical span at residues 164-184; it reads ALFTGWAAASLCLLGGVLLSC. Over 185 to 211 the chain is Cytoplasmic; sequence SCPRKTTSYPTPRPYPKPTPSSGKDYV. A disordered region spans residues 190–211; it reads TTSYPTPRPYPKPTPSSGKDYV. The interactions with TJP1, TJP2, TJP3 and PATJ stretch occupies residues 210-211; sequence YV.

It belongs to the claudin family. Can form homo- and heteropolymers with other CLDN. Homopolymers interact with CLDN3, but not CLDN2, homopolymers. Directly interacts with TJP1/ZO-1, TJP2/ZO-2 and TJP3/ZO-3. Interacts with MPDZ and PATJ. Interacts with OCLN, CD81, CLDN4, CLDN6 and CLDN9. In terms of tissue distribution, detected in epidermis and liver (at protein level). Widely expressed, with highest levels in liver and kidney.

Its subcellular location is the cell junction. It is found in the tight junction. The protein localises to the cell membrane. It localises to the basolateral cell membrane. Claudins function as major constituents of the tight junction complexes that regulate the permeability of epithelia. While some claudin family members play essential roles in the formation of impermeable barriers, others mediate the permeability to ions and small molecules. Often, several claudin family members are coexpressed and interact with each other, and this determines the overall permeability. CLDN1 is required to prevent the paracellular diffusion of small molecules through tight junctions in the epidermis and is required for the normal barrier function of the skin. Required for normal water homeostasis and to prevent excessive water loss through the skin, probably via an indirect effect on the expression levels of other proteins, since CLDN1 itself seems to be dispensable for water barrier formation in keratinocyte tight junctions. The sequence is that of Claudin-1 (Cldn1) from Mus musculus (Mouse).